Consider the following 315-residue polypeptide: Heterodimeric geranylgeranyl pyrophosphate synthase small subunit 1, chloroplastic (315 aa).

Residues Asp124 and Gly130 each coordinate Mg(2+). The dimethylallyl diphosphate site is built by Lys228, Gln265, and Lys280.

It belongs to the FPP/GGPP synthase family. In terms of assembly, part of a heterodimeric geranyl(geranyl)diphosphate synthase. It depends on Mg(2+) as a cofactor. As to expression, mainly expressed in trichomes, and, to a lower extent, in roots, leaves, flowers and stems.

It is found in the plastid. The protein resides in the chloroplast thylakoid membrane. The protein localises to the chloroplast. Functionally, heterodimeric geranyl(geranyl)-diphosphate (GPP) synthase small subunit. The small subunit alone is inactive in vitro while the large subunit GGPPS1 catalyzes mainly the production of geranygeranyl-diphosphate in vitro. Upon association of the two subunits, the product profile changes and the production of gerany-diphosphate is strongly increased. This chain is Heterodimeric geranylgeranyl pyrophosphate synthase small subunit 1, chloroplastic, found in Cannabis sativa (Hemp).